We begin with the raw amino-acid sequence, 460 residues long: Chromosomal replication initiator protein DnaA (460 aa).

The domain I, interacts with DnaA modulators stretch occupies residues 1–91; sequence MNLTSPKVST…SLWQSEDKSI (91 aa). The domain II stretch occupies residues 91–122; it reads IRSIDIQVIEERNSNFNVILKNREESNHNLGS. Residues 123–342 form a domain III, AAA+ region region; that stretch reads PLDPRFTFDN…GALNKVTHTS (220 aa). ATP contacts are provided by G169, G171, K172, and T173. The interval 343–460 is domain IV, binds dsDNA; that stretch reads LIGRSMTVES…EINRLKKMFK (118 aa).

This sequence belongs to the DnaA family. Oligomerizes as a right-handed, spiral filament on DNA at oriC.

It localises to the cytoplasm. Functionally, plays an essential role in the initiation and regulation of chromosomal replication. ATP-DnaA binds to the origin of replication (oriC) to initiate formation of the DNA replication initiation complex once per cell cycle. Binds the DnaA box (a 9 base pair repeat at the origin) and separates the double-stranded (ds)DNA. Forms a right-handed helical filament on oriC DNA; dsDNA binds to the exterior of the filament while single-stranded (ss)DNA is stabiized in the filament's interior. The ATP-DnaA-oriC complex binds and stabilizes one strand of the AT-rich DNA unwinding element (DUE), permitting loading of DNA polymerase. After initiation quickly degrades to an ADP-DnaA complex that is not apt for DNA replication. Binds acidic phospholipids. In Wolbachia pipientis wMel, this protein is Chromosomal replication initiator protein DnaA.